Here is a 323-residue protein sequence, read N- to C-terminus: G patch domain-containing protein 4 (323 aa).

4 disordered regions span residues Met-1–Arg-32, Gly-84–Asn-110, Pro-124–Leu-185, and Ala-197–Glu-323. Composition is skewed to basic and acidic residues over residues Ser-9–Arg-32 and Gly-84–Asp-94. A G-patch domain is found at Gly-11 to Ala-57. A compositionally biased stretch (low complexity) spans Lys-131–Ser-141. Acidic residues predominate over residues Glu-252–Ser-261. Positions Ser-281–Arg-291 are enriched in basic residues. The span at Ser-294 to Thr-306 shows a compositional bias: polar residues. A compositionally biased stretch (basic residues) spans Lys-311–Glu-323.

The polypeptide is G patch domain-containing protein 4 (gpatch4) (Xenopus tropicalis (Western clawed frog)).